A 40-amino-acid polypeptide reads, in one-letter code: Photosystem II reaction center protein J (40 aa).

A helical transmembrane segment spans residues 8-28 (IPLWIIGTVAGILVIGLVGVF).

Belongs to the PsbJ family. PSII is composed of 1 copy each of membrane proteins PsbA, PsbB, PsbC, PsbD, PsbE, PsbF, PsbH, PsbI, PsbJ, PsbK, PsbL, PsbM, PsbT, PsbX, PsbY, PsbZ, Psb30/Ycf12, at least 3 peripheral proteins of the oxygen-evolving complex and a large number of cofactors. It forms dimeric complexes.

Its subcellular location is the plastid. The protein resides in the chloroplast thylakoid membrane. Functionally, one of the components of the core complex of photosystem II (PSII). PSII is a light-driven water:plastoquinone oxidoreductase that uses light energy to abstract electrons from H(2)O, generating O(2) and a proton gradient subsequently used for ATP formation. It consists of a core antenna complex that captures photons, and an electron transfer chain that converts photonic excitation into a charge separation. This Helianthus annuus (Common sunflower) protein is Photosystem II reaction center protein J.